Here is a 627-residue protein sequence, read N- to C-terminus: MIYDYGYDVIVVGGGHAGVEAASASARIGAKTLLLTHNIDTIGQMSCNPAIGGIGKGHLVKEIDAMGGVMAKAIDMAGIQFRILNSRKGPAVRATRAQADRLLYKKAINSLINNQENLDIFQDSVDDLVVENNTVCGAITKTGITFRAKKVVLTVGTFLGGKIHIGKVSNAGGRAGDQPSNALAARLRSLPFRVDRLKTGTPPRIDRRSVDFSVMEVQHGDNPTPYFSFFSKGKIEHPRQIPCYITYTNNETHKIITDNLDKSAMYSGLIEGIGPRYCPSIEDKVVRFADKERHQIFVEPEGLNSIELYPNGLSTSLPFEVQCNYIRSIKGFEKAFIMRPGYAIEYDFFDPRDLKPTLETKHIKNLYFAGQINGTTGYEEAGAQGLVASINAAISIDSDKSWYPTRADSYIGVLIDDLITKGTKEPYRMFTSRAEYRLILREDNADLRLSNKACELGLLSKEDQQHFISKKNAIIENIAMMKNTWIGPQTQKARDLEKFLDKKMTRESTLFDLLKRPEIDYSKLQQISELNLNLQDDAVIEQIEISAKYSGYIERQNKDIEKTATFEQKAIPTDFNYSQVKGLSNEVLQKLTEQKPTTLGEASRIPGITPAAISLLTIYMKKTGFIK.

Residues glycine 13–glycine 18, valine 125, and serine 180 each bind FAD. Position 274–288 (glycine 274–phenylalanine 288) interacts with NAD(+). Residue glutamine 371 participates in FAD binding.

This sequence belongs to the MnmG family. Homodimer. Heterotetramer of two MnmE and two MnmG subunits. It depends on FAD as a cofactor.

Its subcellular location is the cytoplasm. In terms of biological role, NAD-binding protein involved in the addition of a carboxymethylaminomethyl (cmnm) group at the wobble position (U34) of certain tRNAs, forming tRNA-cmnm(5)s(2)U34. This is tRNA uridine 5-carboxymethylaminomethyl modification enzyme MnmG from Francisella tularensis subsp. tularensis (strain FSC 198).